The following is a 301-amino-acid chain: Ubiquinone biosynthesis protein COQ4, mitochondrial (301 aa).

The N-terminal 46 residues, 1-46 (MEVTLKRSAALARQTTPLLRPLRPVATYPSNNNNNNNPTPQQRRPY), are a transit peptide targeting the mitochondrion. Residues 14–48 (QTTPLLRPLRPVATYPSNNNNNNNPTPQQRRPYSL) are disordered. The span at 38 to 48 (PTPQQRRPYSL) shows a compositional bias: polar residues. Zn(2+)-binding residues include H185, D186, H189, and E201.

Belongs to the COQ4 family. Component of a multi-subunit COQ enzyme complex, composed of at least COQ3, COQ4, COQ5, COQ6, COQ7 and COQ9. Zn(2+) is required as a cofactor.

It is found in the mitochondrion inner membrane. The catalysed reaction is a 4-hydroxy-3-methoxy-5-(all-trans-polyprenyl)benzoate + H(+) = a 2-methoxy-6-(all-trans-polyprenyl)phenol + CO2. The protein operates within cofactor biosynthesis; ubiquinone biosynthesis. Functionally, lyase that catalyzes the C1-decarboxylation of 4-hydroxy-3-methoxy-5-(all-trans-polyprenyl)benzoic acid into 2-methoxy-6-(all-trans-polyprenyl)phenol during ubiquinone biosynthesis. The sequence is that of Ubiquinone biosynthesis protein COQ4, mitochondrial from Podospora anserina (strain S / ATCC MYA-4624 / DSM 980 / FGSC 10383) (Pleurage anserina).